Reading from the N-terminus, the 207-residue chain is MFIVIEGCEGSGKSSLTELLKDRLIAEGKAVVATREPGGSPLGERVRDLILEPSTPSISPYTELFLFLAARAEHITKKIFPALESGNIVICDRFHDSTIVYQGIAEGLGKEYVTSLCHHVVGEKKFLPDLTCLLDIPADEGLRRKQQQKSLDKFEDKPLAYHTKIREGFLSLAEAHPNSYLILDGRQPLEESLNKVMTAYTELALCK.

7–14 contacts ATP; the sequence is GCEGSGKS.

This sequence belongs to the thymidylate kinase family.

The enzyme catalyses dTMP + ATP = dTDP + ADP. In terms of biological role, phosphorylation of dTMP to form dTDP in both de novo and salvage pathways of dTTP synthesis. The polypeptide is Thymidylate kinase (Chlamydia caviae (strain ATCC VR-813 / DSM 19441 / 03DC25 / GPIC) (Chlamydophila caviae)).